The sequence spans 482 residues: Histone deacetylase 1 (482 aa).

The segment at 9 to 321 is histone deacetylase; the sequence is RKVCYYYDGD…WTYETAVALD (313 aa). 2 residues coordinate 1D-myo-inositol 1,4,5,6-tetrakisphosphate: glycine 27 and lysine 31. Lysine 74 is modified (N6-acetyllysine; alternate). Lysine 74 is covalently cross-linked (Glycyl lysine isopeptide (Lys-Gly) (interchain with G-Cter in SUMO2); alternate). Histidine 141 is a catalytic residue. Residues aspartate 176 and histidine 178 each coordinate Zn(2+). Lysine 220 carries the post-translational modification N6-acetyllysine. Cysteine 261 is modified (S-nitrosocysteine). A Zn(2+)-binding site is contributed by aspartate 264. Arginine 270 contributes to the 1D-myo-inositol 1,4,5,6-tetrakisphosphate binding site. Residue cysteine 273 is modified to S-nitrosocysteine. Residues 390–400 show a composition bias toward acidic residues; it reads PEESGDEDEED. The segment at 390–482 is disordered; the sequence is PEESGDEDEE…KGVKEEVKLA (93 aa). 5 positions are modified to phosphoserine: serine 393, serine 406, serine 409, serine 421, and serine 423. The span at 401 to 416 shows a compositional bias: basic and acidic residues; that stretch reads PDKRISICSSDKRIAC. Residues 417 to 427 show a composition bias toward acidic residues; sequence EEEFSDSDEEG. Lysine 432 is subject to N6-methylated lysine; by EHMT2. Residue lysine 438 forms a Glycyl lysine isopeptide (Lys-Gly) (interchain with G-Cter in SUMO2) linkage. Residues 443–482 are compositionally biased toward basic and acidic residues; sequence VKTEDEKEKDPEEKKEVTEEEKTKEEKQEAKGVKEEVKLA. Lysine 444 participates in a covalent cross-link: Glycyl lysine isopeptide (Lys-Gly) (interchain with G-Cter in SUMO2); alternate. A Glycyl lysine isopeptide (Lys-Gly) (interchain with G-Cter in SUMO); alternate cross-link involves residue lysine 444. Glycyl lysine isopeptide (Lys-Gly) (interchain with G-Cter in SUMO2) cross-links involve residues lysine 456, lysine 457, and lysine 473. Lysine 476 participates in a covalent cross-link: Glycyl lysine isopeptide (Lys-Gly) (interchain with G-Cter in SUMO2); alternate. A Glycyl lysine isopeptide (Lys-Gly) (interchain with G-Cter in SUMO); alternate cross-link involves residue lysine 476. Residue lysine 480 forms a Glycyl lysine isopeptide (Lys-Gly) (interchain with G-Cter in SUMO2) linkage.

The protein belongs to the histone deacetylase family. HD type 1 subfamily. In terms of assembly, part of the core histone deacetylase (HDAC) complex composed of HDAC1, HDAC2, RBBP4 and RBBP7, the core complex associates with SIN3, SAP18 and SAP30 to form the SIN3 HDAC complex. Component of the nucleosome remodeling and deacetylase (NuRD) repressor complex, composed of core proteins MTA1, MTA2, MTA3, RBBP4, RBBP7, HDAC1, HDAC2, MBD2, MBD3, and peripherally associated proteins CDK2AP1, CDK2AP2, GATAD2A, GATAD2B, CHD3, CHD4 and CHD5. The exact stoichiometry of the NuRD complex is unknown, and some subunits such as MBD2 and MBD3, GATAD2A and GATAD2B, and CHD3, CHD4 and CHD5 define mutually exclusive NuRD complexes. Component of a BHC histone deacetylase complex that contains HDAC1, HDAC2, HMG20B/BRAF35, KDM1A, RCOR1/CoREST and PHF21A/BHC80. The BHC complex may also contain ZMYM2, ZNF217, ZMYM3, GSE1 and GTF2I. Component of a mSin3A corepressor complex that contains SIN3A, SAP130, SUDS3/SAP45, ARID4B/SAP180, HDAC1 and HDAC2. Found in a trimeric complex with APBB1 and TSHZ3; the interaction between HDAC1 and APBB1 is mediated by TSHZ3. Forms a complex comprising APPL1, RUVBL2, APPL2, CTNNB1 and HDAC2. Component of a RCOR/GFI/KDM1A/HDAC complex. Part of a complex composed of TRIM28, HDAC1, HDAC2 and EHMT2. Part of a complex containing at least CDYL, MIER1, MIER2, HDAC1 and HDAC2. The large PER complex involved in the histone deacetylation is composed of at least HDAC1, PER2, SFPQ and SIN3A. Associates with the 9-1-1 complex; interacts with HUS1. Found in a complex with DNMT3A and HDAC7. Found in a complex with YY1, SIN3A and GON4L. Identified in a histone deacetylase complex that contains DNTTIP1, HDAC1 and MIDEAS; this complex assembles into a tetramer that contains four copies of each protein chain. Found in a complex composed of at least SINHCAF, SIN3A, HDAC1, SAP30, RBBP4, OGT and TET1. Component of the SIN3B complex, which includes SIN3B, HDAC1, PHF12 and MORF4L1. Interacts with GFI1; the interaction is direct. Interacts directly with GFI1B. Interacts with TSHZ3 (via N-terminus); the interaction is direct. Interacts with APEX1; the interaction is not dependent on the acetylated status of APEX1. Interacts with BANP. Interacts with BAZ2A/TIP5. Interacts with BCL6. Interacts with BCOR. Interacts with BHLHE40/DEC1. Interacts with BRCC3; this interaction is enhanced in the presence of PWWP2B. Interacts with BRMS1. Interacts with BRMS1L. Interacts with C10orf90/FATS (via its N-terminal); the interaction prevents binding of HDAC1 to CDKN1A/p21 and facilitates the acetylation and stabilization of CDKN1A/p21. Interacts with CBFA2T3. Interacts with CCAR2. Interacts with CDK2AP1. Interacts with CHD3. Interacts with CHD4. Interacts with CHFR. Interacts with CIART. Interacts with CDKN1A/p21. Interacts with CDK5 complexed to CDK5R1 (p25). Interacts with CRY1. Interacts with DAXX. Interacts with DDIT3/CHOP. Interacts with DDX5. Interacts with DHX36; this interaction occurs in a RNA-dependent manner. Interacts with DNMT1. Interacts with DNTTIP1. Interacts with E4F1. Interacts with EP300. Interacts with ERCC6. Interacts with GATAD2A. Interacts with HCFC1. Interacts with HDAC9. Interacts with HUS1. Interacts with INSM1. Interacts with KDM4A. Interacts with KDM5A; this interaction impairs histone deacetylation. Interacts with KDM5B. Interacts with KLF1. Interacts with MBD3L2. Interacts with MIER1. Interacts with NFE4. Interacts with NR4A2/NURR1. Interacts with NR1D2 (via C-terminus). Interacts with NRIP1. Interacts with NSD2. Interacts with PACS2. Interacts with PHB2. Interacts with PPHLN1. Interacts with PRDM6. Interacts with PRDM16. Interacts with PWWP2A in a MTA1-dependent manner. Interacts with PWWP2B. Interacts with RB1. Interacts with RERE. Interacts with SANBR (via the BTB domain). Interacts with SAMSN1. Interacts with SAP30L. Interacts with SETDB1. Interacts with SIN3A. Interacts with SMAD3. Interacts with SMAD4; positively regulated by ZBTB7A. Interacts with SMARCAD1. Interacts with SMARCA4/BRG1. Interacts with SMYD2. Interacts with SMYD4 (via MYND-type zinc finger). Interacts with SP1; the interaction deacetylates SP1 and regulates its transcriptional activity. Interacts with SP3; the interaction deacetylates SP3 and regulates its transcriptional activity. In vitro, C(18) ceramides increase this interaction and the subsequent SP3 deacetylation and SP3-mediated repression of the TERT promoter. Interacts with SPEN/MINT. Interacts with SPHK2. Interacts with SUV39H1. Interacts with TGIF. Interacts with TGIF2. Interacts with TRAF6. Interacts with TRIM28; the interaction recruits HDAC1 to E2F1 and inhibits its acetylation. Interacts with TSC22D3 isoform 1; this interaction affects HDAC1 activity on MYOG promoter and thus inhibits MYOD1 transcriptional activity. Interacts with UHRF1. Interacts with UHRF2. Interacts with ZBTB7A. Interacts with ZMYND8. Interacts with ZMYND15. Interacts with ZNF431. Interacts with ZNF516; this interaction is enhanced in the presence of PWWP2B. Interacts with ZNF541. Interacts with ZNF638. Interacts with ZNHIT1. Interacts with the non-histone region of MACROH2A1. Identified in a complex with HDAC2, KCTD19, DNTTIP1 and ZNF541. Interacts with MSX3. Interacts with VRK1. The cofactor is Zn(2+). In terms of processing, sumoylated on Lys-444 and Lys-476; which promotes enzymatic activity. Desumoylated by SENP1. Post-translationally, phosphorylation on Ser-421 and Ser-423 promotes enzymatic activity and interactions with NuRD and SIN3 complexes. Phosphorylated by CDK5. Ubiquitinated by CHFR and KCTD11, leading to its degradation by the proteasome.

Its subcellular location is the nucleus. The catalysed reaction is N(6)-acetyl-L-lysyl-[histone] + H2O = L-lysyl-[histone] + acetate. It carries out the reaction N(6)-acetyl-L-lysyl-[protein] + H2O = L-lysyl-[protein] + acetate. It catalyses the reaction N(6)-(2E)-butenoyl-L-lysyl-[protein] + H2O = (2E)-2-butenoate + L-lysyl-[protein]. The enzyme catalyses N(6)-[(S)-lactoyl]-L-lysyl-[protein] + H2O = (S)-lactate + L-lysyl-[protein]. Inositol tetraphosphate (1D-myo-inositol 1,4,5,6-tetrakisphosphate) may act as an intermolecular glue between HDAC1 and N-Cor repressor complex components. Histone deacetylase that catalyzes the deacetylation of lysine residues on the N-terminal part of the core histones (H2A, H2B, H3 and H4). Histone deacetylation gives a tag for epigenetic repression and plays an important role in transcriptional regulation, cell cycle progression and developmental events. Histone deacetylases act via the formation of large multiprotein complexes. Acts as a component of the histone deacetylase NuRD complex which participates in the remodeling of chromatin. As part of the SIN3B complex is recruited downstream of the constitutively active genes transcriptional start sites through interaction with histones and mitigates histone acetylation and RNA polymerase II progression within transcribed regions contributing to the regulation of transcription. Also functions as a deacetylase for non-histone targets, such as NR1D2, RELA, SP1, SP3, STAT3 and TSHZ3. Deacetylates SP proteins, SP1 and SP3, and regulates their function. Component of the BRG1-RB1-HDAC1 complex, which negatively regulates the CREST-mediated transcription in resting neurons. Upon calcium stimulation, HDAC1 is released from the complex and CREBBP is recruited, which facilitates transcriptional activation. Deacetylates TSHZ3 and regulates its transcriptional repressor activity. Deacetylates 'Lys-310' in RELA and thereby inhibits the transcriptional activity of NF-kappa-B. Deacetylates NR1D2 and abrogates the effect of KAT5-mediated relieving of NR1D2 transcription repression activity. Component of a RCOR/GFI/KDM1A/HDAC complex that suppresses, via histone deacetylase (HDAC) recruitment, a number of genes implicated in multilineage blood cell development. Involved in CIART-mediated transcriptional repression of the circadian transcriptional activator: CLOCK-BMAL1 heterodimer. Required for the transcriptional repression of circadian target genes, such as PER1, mediated by the large PER complex or CRY1 through histone deacetylation. In addition to protein deacetylase activity, also has protein-lysine deacylase activity: acts as a protein decrotonylase and delactylase by mediating decrotonylation ((2E)-butenoyl) and delactylation (lactoyl) of histones, respectively. This Bos taurus (Bovine) protein is Histone deacetylase 1 (HDAC1).